A 171-amino-acid chain; its full sequence is Ribosome maturation factor RimM (171 aa).

Positions 97–169 constitute a PRC barrel domain; sequence DGEFYYHEII…RVDVDIMEGL (73 aa).

The protein belongs to the RimM family. In terms of assembly, binds ribosomal protein uS19.

It localises to the cytoplasm. Functionally, an accessory protein needed during the final step in the assembly of 30S ribosomal subunit, possibly for assembly of the head region. Essential for efficient processing of 16S rRNA. May be needed both before and after RbfA during the maturation of 16S rRNA. It has affinity for free ribosomal 30S subunits but not for 70S ribosomes. The chain is Ribosome maturation factor RimM from Lactococcus lactis subsp. cremoris (strain SK11).